A 484-amino-acid chain; its full sequence is PTS system MurNAc-GlcNAc-specific EIIBC component (484 aa).

The 83-residue stretch at 5-87 (QQLAERIIAA…AELSGVKLGD (83 aa)) folds into the PTS EIIB type-1 domain. Residue Cys27 is the Phosphocysteine intermediate; for EIIB activity of the active site. Residues 130-484 (KSIANIFIPL…AMRQTDLLGD (355 aa)) form the PTS EIIC type-1 domain. 10 helical membrane-spanning segments follow: residues 135–155 (IFIPLIPAFIGAGLIGGIAAV), 160–180 (MVAGYISGAWITQLITVFNVI), 200–220 (FGATPGLGGVIGGTTLLTGIA), 234–254 (LQPGQGGIIGVIFAVWILSIV), 274–294 (IALLIVGLLTIFIFMPLAGFV), 305–325 (IISIGGVFSGFIIGASFLPLV), 349–369 (LLPIAAMAGAGQVGAALALWV), 384–404 (ALPVGFLGIGEPLIYGVTLPL), 408–428 (FLTACIGGGIGGAVIGGIGHI), and 450–470 (LGYIAGLLTAYAGGFVCTYLF).

It localises to the cell membrane. It carries out the reaction N-acetyl-beta-D-muramate-(1-&gt;4)-N-acetyl-D-glucosamine(out) + N(pros)-phospho-L-histidyl-[protein] = 6-phospho-N-acetyl-beta-D-muramate-(1-&gt;4)-N-acetyl-D-glucosamine(in) + L-histidyl-[protein]. The protein operates within cell wall biogenesis; peptidoglycan recycling. Functionally, the phosphoenolpyruvate-dependent sugar phosphotransferase system (sugar PTS), a major carbohydrate active transport system, catalyzes the phosphorylation of incoming sugar substrates concomitantly with their translocation across the cell membrane. This system is involved in the uptake and phosphorylation of MurNAc-GlcNAc, the principle peptidoglycan turnover product of S.aureus, yielding cytoplasmic MurNAc 6P-GlcNAc. This Staphylococcus aureus (strain bovine RF122 / ET3-1) protein is PTS system MurNAc-GlcNAc-specific EIIBC component.